Reading from the N-terminus, the 839-residue chain is Protein translocase subunit SecA (839 aa).

ATP is bound by residues glutamine 85, 103-107 (GEGKT), and aspartate 492. Positions 794–820 (EINYSGPDAGDTKKEPVRRKEKKIGRN) are disordered. Zn(2+) is bound by residues cysteine 823, cysteine 825, cysteine 834, and cysteine 835.

This sequence belongs to the SecA family. As to quaternary structure, monomer and homodimer. Part of the essential Sec protein translocation apparatus which comprises SecA, SecYEG and auxiliary proteins SecDF. Other proteins may also be involved. The cofactor is Zn(2+).

The protein resides in the cell membrane. It localises to the cytoplasm. The catalysed reaction is ATP + H2O + cellular proteinSide 1 = ADP + phosphate + cellular proteinSide 2.. Part of the Sec protein translocase complex. Interacts with the SecYEG preprotein conducting channel. Has a central role in coupling the hydrolysis of ATP to the transfer of proteins into and across the cell membrane, serving as an ATP-driven molecular motor driving the stepwise translocation of polypeptide chains across the membrane. The sequence is that of Protein translocase subunit SecA from Clostridium acetobutylicum (strain ATCC 824 / DSM 792 / JCM 1419 / IAM 19013 / LMG 5710 / NBRC 13948 / NRRL B-527 / VKM B-1787 / 2291 / W).